Reading from the N-terminus, the 161-residue chain is SsrA-binding protein (161 aa).

Residues 140-161 (KRESIKERDWKRDKQRLLKDRG) form a disordered region.

This sequence belongs to the SmpB family.

Its subcellular location is the cytoplasm. In terms of biological role, required for rescue of stalled ribosomes mediated by trans-translation. Binds to transfer-messenger RNA (tmRNA), required for stable association of tmRNA with ribosomes. tmRNA and SmpB together mimic tRNA shape, replacing the anticodon stem-loop with SmpB. tmRNA is encoded by the ssrA gene; the 2 termini fold to resemble tRNA(Ala) and it encodes a 'tag peptide', a short internal open reading frame. During trans-translation Ala-aminoacylated tmRNA acts like a tRNA, entering the A-site of stalled ribosomes, displacing the stalled mRNA. The ribosome then switches to translate the ORF on the tmRNA; the nascent peptide is terminated with the 'tag peptide' encoded by the tmRNA and targeted for degradation. The ribosome is freed to recommence translation, which seems to be the essential function of trans-translation. This chain is SsrA-binding protein, found in Sphingopyxis alaskensis (strain DSM 13593 / LMG 18877 / RB2256) (Sphingomonas alaskensis).